Consider the following 312-residue polypeptide: Protoheme IX farnesyltransferase 1 (312 aa).

Transmembrane regions (helical) follow at residues G21 to T41, I53 to A73, S105 to A125, L127 to V147, I156 to G176, A182 to M202, V225 to P245, A246 to A266, and L292 to A312.

Belongs to the UbiA prenyltransferase family. Protoheme IX farnesyltransferase subfamily.

The protein localises to the cell membrane. It carries out the reaction heme b + (2E,6E)-farnesyl diphosphate + H2O = Fe(II)-heme o + diphosphate. It participates in porphyrin-containing compound metabolism; heme O biosynthesis; heme O from protoheme: step 1/1. In terms of biological role, converts heme B (protoheme IX) to heme O by substitution of the vinyl group on carbon 2 of heme B porphyrin ring with a hydroxyethyl farnesyl side group. This chain is Protoheme IX farnesyltransferase 1, found in Saccharopolyspora erythraea (strain ATCC 11635 / DSM 40517 / JCM 4748 / NBRC 13426 / NCIMB 8594 / NRRL 2338).